The primary structure comprises 252 residues: Short-chain dehydrogenase/reductase eriH (252 aa).

I16, D65, N92, K125, Y158, K162, V191, and T193 together coordinate NADP(+). Y158 functions as the Proton acceptor in the catalytic mechanism. Y158 functions as the Proton donor in the catalytic mechanism. The Lowers pKa of active site Tyr role is filled by K162.

Belongs to the short-chain dehydrogenases/reductases (SDR) family.

The enzyme catalyses cyathadiol + reduced [NADPH--hemoprotein reductase] + O2 = cyathatriol + oxidized [NADPH--hemoprotein reductase] + H2O + H(+). It carries out the reaction 11-O-acetylcyathatriol + A = 11-O-acetylcyathin A3 + AH2. The catalysed reaction is cyathatriol + A = cyathin A3 + AH2. It functions in the pathway secondary metabolite biosynthesis. In terms of biological role, short-chain dehydrogenase/reductase; part of the gene cluster that mediates the biosynthesis of erinacines, cyathane-xylosides that show unique biological activities, including leishmanicidal activity, stimulating activity for nerve growth-factor synthesis, and agonistic activity toward the kappa opioid receptor. Within the pathway, eriH works with eriA to catalyze C-11 hydroxylation of cyathadiol to produce cyathatriol. EriH also catalyzes oxidation of 11-O-acetyl-cyathatriol into 1-O-acetylcyathin A3. In the absence of eriL and eriJ, the SDR eriH is able to convert cyathatriol to cyathin A3; this is likely a switching mechanism in the biosynthesis of cyathins (C-14 ketogroup)and erinacines (C-14 glycosylated group). The first step of the erinacines biosynthesis pathway is catalyzed by the geranylgeranyl diphosphate (GGPP) synthase eriE via conversion of farnesyl pyrophosphate and isopentyl pyrophosphate into geranylgeranyl pyrophosphate (GGPP). GGPP is then substrate of the diterpene cyclase eriG for the production of cyatha-3,12-diene. The cytochrome P450 monooxygenase eriI then hydroxylates cyatha-3,12-diene at C-14 of the seven-membered ring to produce erinacol, which is further hydroxylated at C-15 by the cytochrome P450 monooxygenase eriC to yield cyathadiol. The cytochrome P450 monooxygenase eriA then catalyzes C-11 hydroxylation in the presence of the short chain dehydrogenase/reductase (SDR) eriH, which leads to the production of cyathatriol. The acetyltransferase eriL converts cyathatriol into 11-O-acetyl-cyathatriol. The SDR eriH catalyzes further oxidation of 11-O-acetyl-cyathatriol into 1-O-acetylcyathin A3. Finally, the glycosyl transferase eriJ tranfers xylose from UDP-xylose onto C-14 of 11-O-acetyl-cyathatriol to form eracine Q. EriJ is also able to convert 11-O-acetyl-cyathatriol to eracine Q2 by using UDP-D-glucose as cosubstrate, but at a lower rate. This is Short-chain dehydrogenase/reductase eriH from Hericium erinaceus (Lion's mane mushroom).